The sequence spans 514 residues: Polygalacturonase (514 aa).

Residues 1–22 (MGMKFMAAVAFLALQLIVMAAA) form the signal peptide. The propeptide occupies 23-50 (EDQSAQIMLDSDIEQYLRSNRSLKKLVH). 6 PbH1 repeats span residues 214-240 (CEGV…DIFA), 241-262 (SKRF…AIGT), 264-284 (SSNI…SIGS), 294-315 (VSHV…RIKT), 323-344 (ASYI…LINQ), and 357-384 (RSAV…QLMC). The active-site Proton donor is Asp255. Asn266 is a glycosylation site (N-linked (GlcNAc...) asparagine). Residue His278 is part of the active site. An N-linked (GlcNAc...) asparagine glycan is attached at Asn397.

It belongs to the glycosyl hydrolase 28 family.

Its subcellular location is the secreted. It localises to the cell wall. The enzyme catalyses (1,4-alpha-D-galacturonosyl)n+m + H2O = (1,4-alpha-D-galacturonosyl)n + (1,4-alpha-D-galacturonosyl)m.. The sequence is that of Polygalacturonase from Chamaecyparis obtusa (Hinoki false-cypress).